The sequence spans 867 residues: Bifunctional cis-abienol synthase, chloroplastic (867 aa).

A chloroplast-targeting transit peptide spans 1-49; sequence MALPVYSLKSHIPITTIASAKMNYTPNKGMITANGRSRRIRLSPNKIVA. Residue Lys-270 participates in substrate binding. Positions 403–406 match the DXDD motif motif; sequence DIDD. Residue Lys-490 participates in substrate binding. Residues Asp-622, Asp-626, Asn-763, Asp-764, Thr-767, and Glu-771 each coordinate Mg(2+). Positions 622–626 match the DDXXD motif motif; that stretch reads DDLYD.

The protein belongs to the terpene synthase family. Tpsd subfamily. It depends on Mg(2+) as a cofactor.

It localises to the plastid. It is found in the chloroplast. The catalysed reaction is 8-hydroxycopalyl diphosphate = cis-abienol + diphosphate. It catalyses the reaction (2E,6E,10E)-geranylgeranyl diphosphate + H2O = 8-hydroxycopalyl diphosphate. Its pathway is terpene metabolism; oleoresin biosynthesis. Its function is as follows. Involved in the biosynthesis of cis-abienol, a labdane diterpene that can be used as synthesis precursor of ambergris substitution fragance products. Bifunctional class I/II enzyme in which both the bicyclization and water capture occur in the class II active site, resulting in an intermediary labda-13-en-8-ol diphosphate, which undergoes cleavage of the diphosphate group and final deprotonation at the class I active site. No activity with copalyl diphosphate as substrate. In Abies balsamea (Balsam fir), this protein is Bifunctional cis-abienol synthase, chloroplastic (CAS).